Reading from the N-terminus, the 177-residue chain is Nucleoside triphosphate/diphosphate phosphatase (177 aa).

Arg23 acts as the Proton donor in catalysis. 6 residues coordinate Mg(2+): Asn87, Asp103, Asp105, Asp107, Asp120, and Glu123.

It belongs to the Ntdp family. Mg(2+) is required as a cofactor.

It carries out the reaction a ribonucleoside 5'-triphosphate + H2O = a ribonucleoside 5'-diphosphate + phosphate + H(+). The catalysed reaction is a ribonucleoside 5'-diphosphate + H2O = a ribonucleoside 5'-phosphate + phosphate + H(+). Its function is as follows. Has nucleoside phosphatase activity towards nucleoside triphosphates and nucleoside diphosphates. This chain is Nucleoside triphosphate/diphosphate phosphatase, found in Streptococcus pyogenes serotype M1.